Reading from the N-terminus, the 142-residue chain is Large ribosomal subunit protein uL13 (142 aa).

Belongs to the universal ribosomal protein uL13 family. Part of the 50S ribosomal subunit.

In terms of biological role, this protein is one of the early assembly proteins of the 50S ribosomal subunit, although it is not seen to bind rRNA by itself. It is important during the early stages of 50S assembly. The chain is Large ribosomal subunit protein uL13 from Pseudomonas fluorescens (strain Pf0-1).